A 429-amino-acid chain; its full sequence is L-cysteine:1D-myo-inositol 2-amino-2-deoxy-alpha-D-glucopyranoside ligase (429 aa).

Cys60 contributes to the Zn(2+) binding site. L-cysteinyl-5'-AMP-binding positions include 60–63 (CGIT), Thr75, and 98–100 (NIT). Positions 62–72 (ITPYDATHLGH) match the 'HIGH' region motif. Residues 204-209 (ERGGDP) carry the 'ERGGDP' region motif. Trp244 contributes to the L-cysteinyl-5'-AMP binding site. Cys248 is a Zn(2+) binding site. Residue 266–268 (GSD) coordinates L-cysteinyl-5'-AMP. Zn(2+) is bound at residue His273. Position 300 (Ile300) interacts with L-cysteinyl-5'-AMP. Residues 306 to 310 (KMSKS) carry the 'KMSKS' region motif.

The protein belongs to the class-I aminoacyl-tRNA synthetase family. MshC subfamily. In terms of assembly, monomer. Requires Zn(2+) as cofactor.

The enzyme catalyses 1D-myo-inositol 2-amino-2-deoxy-alpha-D-glucopyranoside + L-cysteine + ATP = 1D-myo-inositol 2-(L-cysteinylamino)-2-deoxy-alpha-D-glucopyranoside + AMP + diphosphate + H(+). Catalyzes the ATP-dependent condensation of GlcN-Ins and L-cysteine to form L-Cys-GlcN-Ins. The polypeptide is L-cysteine:1D-myo-inositol 2-amino-2-deoxy-alpha-D-glucopyranoside ligase (Mycolicibacterium vanbaalenii (strain DSM 7251 / JCM 13017 / BCRC 16820 / KCTC 9966 / NRRL B-24157 / PYR-1) (Mycobacterium vanbaalenii)).